Consider the following 565-residue polypeptide: FACT complex subunit ctc-1 (565 aa).

2 disordered regions span residues 151–173 (GNDG…ASAG) and 477–565 (LGDD…KKTA). The span at 152–165 (NDGGKSNGHSGTGG) shows a compositional bias: gly residues. Acidic residues-rich tracts occupy residues 478–489 (GDDDMASSDEEA), 500–522 (DEDE…AEEY), and 532–553 (GSEE…DDDE).

The protein belongs to the SSRP1 family. Forms a stable heterodimer with ctc-2/spt16. The dimer of ctc-1 and ctc-2 weakly associates with multiple molecules of nhp-1/nhp6 to form the FACT complex.

Its subcellular location is the nucleus. It localises to the chromosome. Functionally, component of the FACT complex, a general chromatin factor that acts to reorganize nucleosomes. The FACT complex is involved in multiple processes that require DNA as a template such as mRNA elongation, DNA replication and DNA repair. During transcription elongation the FACT complex acts as a histone chaperone that both destabilizes and restores nucleosomal structure. It facilitates the passage of RNA polymerase II and transcription by promoting the dissociation of one histone H2A-H2B dimer from the nucleosome, then subsequently promotes the reestablishment of the nucleosome following the passage of RNA polymerase II. The sequence is that of FACT complex subunit ctc-1 (ctc-1) from Neurospora crassa (strain ATCC 24698 / 74-OR23-1A / CBS 708.71 / DSM 1257 / FGSC 987).